The following is a 477-amino-acid chain: Maternal protein exuperantia-2 (477 aa).

Positions 196–209 (KDGNSTKEDEHENP) are enriched in basic and acidic residues. Disordered stretches follow at residues 196–226 (KDGNSTKEDEHENPEGNSSITDNSGHKNQKQ) and 384–477 (TIKP…FADI). Positions 385-402 (IKPRCKRSGNGTRRRNRA) are enriched in basic residues.

Functionally, ensures the proper localization of the mRNA of the bicoid gene to the anterior regions of the oocyte thus playing a fundamental role in the establishment of the polarity of the oocyte. May bind the bcd mRNA. The protein is Maternal protein exuperantia-2 (exu2) of Drosophila pseudoobscura pseudoobscura (Fruit fly).